The sequence spans 199 residues: Putative pseudouridine methyltransferase (199 aa).

Residues leucine 132 and cysteine 186 each coordinate S-adenosyl-L-methionine.

It belongs to the methyltransferase superfamily. TrmY family.

The protein localises to the cytoplasm. The sequence is that of Putative pseudouridine methyltransferase from Vibrio campbellii (strain ATCC BAA-1116).